The chain runs to 438 residues: Coenzyme A disulfide reductase (438 aa).

Position 8–33 (8–33 (GAVAGGATCASQIRRLDKESDIIIFE)) interacts with FAD. Substrate contacts are provided by threonine 15, glutamine 19, arginine 22, serine 39, and asparagine 42. Cysteine 43 functions as the Nucleophile in the catalytic mechanism. The active-site Redox-active is cysteine 43. Lysine 71 is a substrate binding site. NADP(+) is bound at residue 151–166 (VLVIGAGYVSLEVLEN). Position 267–277 (267–277 (TNVPNIYAIGD)) interacts with FAD. A substrate-binding site is contributed by histidine 299. Residue tyrosine 419 participates in FAD binding. Lysine 427 provides a ligand contact to substrate.

The protein belongs to the class-III pyridine nucleotide-disulfide oxidoreductase family. Homodimer. The cofactor is FAD.

The catalysed reaction is NADP(+) + 2 CoA = CoA-disulfide + NADPH + H(+). Catalyzes specifically the NADPH-dependent reduction of coenzyme A disulfide. The sequence is that of Coenzyme A disulfide reductase from Staphylococcus aureus (strain Mu3 / ATCC 700698).